Reading from the N-terminus, the 1243-residue chain is Plasma membrane calcium-transporting ATPase 2 (1243 aa).

Over residues 1 to 13 the composition is skewed to polar residues; sequence MGDMTNSDFYSKN. The tract at residues 1–24 is disordered; the sequence is MGDMTNSDFYSKNQRNESSHGGEF. Topologically, residues 1–94 are cytoplasmic; that stretch reads MGDMTNSDFY…NFIPPKKPKT (94 aa). 2 positions are modified to phosphoserine: serine 18 and serine 27. The chain crosses the membrane as a helical span at residues 95–115; the sequence is FLQLVWEALQDVTLIILEIAA. The Extracellular segment spans residues 116–152; that stretch reads IISLGLSFYHPPGESNEGCATAQGGAEDEGEAEAGWI. Residues 153–173 form a helical membrane-spanning segment; the sequence is EGAAILLSVICVVLVTAFNDW. The Cytoplasmic segment spans residues 174–390; the sequence is SKEKQFRGLQ…KEKSVLQGKL (217 aa). Positions 296–308 are enriched in basic and acidic residues; it reads EEKKDKKGVKKGD. Residues 296-382 are disordered; that stretch reads EEKKDKKGVK…KKKANMHKKE (87 aa). Low complexity-rich tracts occupy residues 313 to 330 and 337 to 356; these read PAAD…ANAS and QDGS…GAAA. A helical transmembrane segment spans residues 391–410; it reads TKLAVQIGKAGLVMSAITVI. At 411 to 443 the chain is on the extracellular side; the sequence is ILVLYFTVDTFVVNKKPWLTECTPVYVQYFVKF. A helical membrane pass occupies residues 444 to 461; the sequence is FIIGVTVLVVAVPEGLPL. Over 462 to 875 the chain is Cytoplasmic; sequence AVTISLAYSV…MWGRNVYDSI (414 aa). Aspartate 499 (4-aspartylphosphate intermediate) is an active-site residue. Mg(2+) contacts are provided by aspartate 820 and aspartate 824. A helical transmembrane segment spans residues 876 to 895; that stretch reads SKFLQFQLTVNVVAVIVAFT. The Extracellular segment spans residues 896-905; sequence GACITQDSPL. The helical transmembrane segment at 906–926 threads the bilayer; that stretch reads KAVQMLWVNLIMDTFASLALA. Over 927–946 the chain is Cytoplasmic; it reads TEPPTETLLLRKPYGRNKPL. A helical transmembrane segment spans residues 947–969; that stretch reads ISRTMMKNILGHAVYQLTLIFTL. Residues 970–987 lie on the Extracellular side of the membrane; the sequence is LFVGEKMFQIDSGRNAPL. The helical transmembrane segment at 988–1009 threads the bilayer; sequence HSPPSEHYTIIFNTFVMMQLFN. Topologically, residues 1010–1028 are cytoplasmic; sequence EINARKIHGERNVFDGIFR. Residues 1029-1050 form a helical membrane-spanning segment; the sequence is NPIFCTIVLGTFAIQIVIVQFG. Over 1051–1060 the chain is Extracellular; sequence GKPFSCSPLQ. The chain crosses the membrane as a helical span at residues 1061–1082; sequence LDQWMWCIFIGLGELVWGQVIA. At 1083-1243 the chain is on the cytoplasmic side; the sequence is TIPTSRLKFL…SPIHSLETSL (161 aa). A phosphoserine mark is found at glutamate 1107, isoleucine 1116, aspartate 1117, arginine 1121, tryptophan 1130, phenylalanine 1131, and glutamine 1138. The interval 1123–1140 is calmodulin-binding subdomain A; the sequence is LRRGQILWFRGLNRIQTQ. Position 1139 is a phosphothreonine; by PKC (threonine 1139). Positions 1141–1150 are calmodulin-binding subdomain B; the sequence is IRVVKAFRSS. Valine 1144, phenylalanine 1147, arginine 1148, tyrosine 1152, arginine 1161, threonine 1162, isoleucine 1175, and serine 1178 each carry phosphoserine. The residue at position 1188 (threonine 1188) is a Phosphothreonine. A disordered region spans residues 1194 to 1243; that stretch reads AALKQNSSPPSSLNKNNSAIDSGINLTTDTSKSATSSSPGSPIHSLETSL. Low complexity-rich tracts occupy residues 1196 to 1211 and 1220 to 1234; these read LKQN…KNNS and TTDT…SPGS. Serine 1201 is subject to Phosphoserine; by PKA. Residue serine 1211 is modified to Phosphoserine.

This sequence belongs to the cation transport ATPase (P-type) (TC 3.A.3) family. Type IIB subfamily. Interacts with PDZD11. Isoforms containing segment B are found in brain, uterus, liver and kidney and in low levels in other tissues. Isoforms containing segment W are found in kidney, uterus, and pancreas. Isoforms containing segment Y are found in pancreas and in low levels in brain and heart. Isoforms containing segment Z are found in brain and heart and isoforms containing segment X are found in low levels in brain. Isoforms containing segment A are found in low levels in heart and small intestine while isoforms containing segment C are found in testis and in low levels in other tissues.

The protein localises to the cell membrane. It localises to the synapse. It is found in the apical cell membrane. Its subcellular location is the basolateral cell membrane. The enzyme catalyses Ca(2+)(in) + ATP + H2O = Ca(2+)(out) + ADP + phosphate + H(+). Its function is as follows. ATP-driven Ca(2+) ion pump involved in the maintenance of basal intracellular Ca(2+) levels in specialized cells of cerebellar circuit and vestibular and cochlear systems. Uses ATP as an energy source to transport cytosolic Ca(2+) ions across the plasma membrane to the extracellular compartment. Has fast activation and Ca(2+) clearance rate suited to control fast neuronal Ca(2+) dynamics. At parallel fiber to Purkinje neuron synapse, mediates presynaptic Ca(2+) efflux in response to climbing fiber-induced Ca(2+) rise. Provides for fast return of Ca(2+) concentrations back to their resting levels, ultimately contributing to long-term depression induction and motor learning. Plays an essential role in hearing and balance. In cochlear hair cells, shuttles Ca(2+) ions from stereocilia to the endolymph and dissipates Ca(2+) transients generated by the opening of the mechanoelectrical transduction channels. Regulates Ca(2+) levels in the vestibular system, where it contributes to the formation of otoconia. In non-excitable cells, regulates Ca(2+) signaling through spatial control of Ca(2+) ions extrusion and dissipation of Ca(2+) transients generated by store-operated channels. In lactating mammary gland, allows for the high content of Ca(2+) ions in the milk. The sequence is that of Plasma membrane calcium-transporting ATPase 2 (Atp2b2) from Rattus norvegicus (Rat).